A 457-amino-acid polypeptide reads, in one-letter code: UPF0210 protein Sfum_2948 (457 aa).

The protein belongs to the UPF0210 family. As to quaternary structure, homodimer.

In Syntrophobacter fumaroxidans (strain DSM 10017 / MPOB), this protein is UPF0210 protein Sfum_2948.